A 451-amino-acid chain; its full sequence is Serine/threonine-protein kinase VRK3 (451 aa).

Disordered regions lie at residues 28-61 (KHEGSQSFVKPFTSSSQGSRRKTNTSSETSSKKV) and 74-125 (LPSE…MTAS). The span at 32-45 (SQSFVKPFTSSSQG) shows a compositional bias: polar residues. Positions 47–62 (RRKTNTSSETSSKKVK) match the Nuclear localization signal motif. Phosphoserine is present on residues Ser53, Ser57, Ser80, Ser81, Ser88, and Ser106. A compositionally biased stretch (polar residues) spans 78–91 (GKSSGSEDTLSTSG). Over residues 98–116 (SRSPTPRSSPQTTRQSPQT) the composition is skewed to low complexity. A Protein kinase domain is found at 123–434 (TASLEALPVG…TLRNELEALL (312 aa)).

This sequence belongs to the protein kinase superfamily. CK1 Ser/Thr protein kinase family. VRK subfamily. In terms of assembly, interacts with DUSP3. Interacts with RAN. Interacts with HSP70/HSPA1A. In terms of processing, phosphorylated at Ser-106 by CDK5; leading to protection of the cell against H2O2-induced apoptosis. Post-translationally, ubiquitinated by RNF144A.

Its subcellular location is the nucleus. It is found in the cytoplasm. The enzyme catalyses L-seryl-[protein] + ATP = O-phospho-L-seryl-[protein] + ADP + H(+). Functionally, plays a role in the regulation of the cell cycle by phosphorylating the nuclear envelope protein barrier-to-autointegration factor/BAF that is required for disassembly and reassembly, respectively, of the nuclear envelope during mitosis. Under normal physiological conditions, negatively regulates ERK activity along with VHR phosphatase in the nucleus, causing timely and transient action of ERK. Stress conditions activate CDK5 which phosphorylates VRK3 to increase VHR phosphatase activity and suppress prolonged ERK activation that causes cell death. For example, upon glutamate induction, promotes nuclear localization of HSP70/HSPA1A to inhibit ERK activation via VHR phosphatase. The sequence is that of Serine/threonine-protein kinase VRK3 (VRK3) from Bos taurus (Bovine).